A 28-amino-acid chain; its full sequence is VTVVQYRSTNASSGYLNLRVYLLDTGLR.

Inhibited by PMSF. Not or very weakly inhibited by EDTA, EGTA, beta-mercaptoethanol, benzamidine, aprotinin, iodoacetic acid, pepstatin A and SBTI. Its function is as follows. Alkaline thrombin-like serine protease. Has fibrinolytic and fibrinogenolytic but not plasminogenolytic activity. Cleaves fibrinogen chains Aalpha, Bbeta and gamma chains in that order. Cleaves after Arg and Lys residues. This Hediste japonica (Polychaete worm) protein is Alkaline serine protease NJP.